The primary structure comprises 411 residues: Arginine deiminase (411 aa).

C401 serves as the catalytic Amidino-cysteine intermediate.

The protein belongs to the arginine deiminase family.

The protein localises to the cytoplasm. It carries out the reaction L-arginine + H2O = L-citrulline + NH4(+). The protein operates within amino-acid degradation; L-arginine degradation via ADI pathway; carbamoyl phosphate from L-arginine: step 1/2. This Staphylococcus aureus (strain JH9) protein is Arginine deiminase.